The following is a 364-amino-acid chain: MANKTILFNKHLESNAKMVDFHGWDMPLNYGSQIEEHNAVRQDAGMFDVSHMTVVDVIGNDACAFLRKLLANDVAKLKVPGKALYGGMLDENAGVIDDLITYYLTDTNYRVVVNSATREKDLAWIAKQSQGFDVTVTERPELAMIAVQGPNAKAKAAAVLSAEQNTAIEGMKPFFGKQAGSLFIATTGYTGEAGYEIIVPEDEAQAMWQALLDQGVKPCGLGARDTLRLEAGMNLYGLDMDETINPLAANMGWTIAWEPSDRDFIGRKALETLRDAGTDKLVGLVMEEKGVLRHDMPVFFTDSAGVEHQGVITSGTFSPTLGYSIAMARVPNSIGDTAEVEMRKKRVAVRVVAPNFVRNGKQAF.

The protein belongs to the GcvT family. In terms of assembly, the glycine cleavage system is composed of four proteins: P, T, L and H.

The catalysed reaction is N(6)-[(R)-S(8)-aminomethyldihydrolipoyl]-L-lysyl-[protein] + (6S)-5,6,7,8-tetrahydrofolate = N(6)-[(R)-dihydrolipoyl]-L-lysyl-[protein] + (6R)-5,10-methylene-5,6,7,8-tetrahydrofolate + NH4(+). The glycine cleavage system catalyzes the degradation of glycine. In Shewanella baltica (strain OS223), this protein is Aminomethyltransferase.